Here is a 404-residue protein sequence, read N- to C-terminus: Latent membrane protein 1 (404 aa).

Residues 1–23 (MERDLESAPPSAPRPPLGPPLSS) lie on the Cytoplasmic side of the membrane. Residues 24-44 (SIGLALLLLLLALLFWLYIVM) traverse the membrane as a helical segment. The Extracellular portion of the chain corresponds to 45-51 (SDWTGGA). The helical transmembrane segment at 52 to 72 (LLVLYSFALMLIIIILIIFIF) threads the bilayer. Over 73–75 (RRD) the chain is Cytoplasmic. The helical transmembrane segment at 76 to 96 (LLCPLGGLGLLLLMITLLLIA) threads the bilayer. Residues 97-106 (LWNLHGQALY) lie on the Extracellular side of the membrane. Residues 107–127 (LGIVLFIFGCLLVFGIWIYFL) form a helical membrane-spanning segment. Residues 128-139 (EILWRLGATLWQ) lie on the Cytoplasmic side of the membrane. Residues 140-160 (LLAFILAFFLAIILLIIALYL) form a helical membrane-spanning segment. The Extracellular portion of the chain corresponds to 161–163 (QQN). A helical transmembrane segment spans residues 164-184 (WWTLLVDLLWLLLFMAILIWM). At 185 to 404 (YYHGPRHTDE…HGPVQLSYYD (220 aa)) the chain is on the cytoplasmic side. The tract at residues 194–232 (EHHHDDSLPHPQQATDDSSHESDSNSNEGRHHLLVSGAG) is CTAR1. Residues 194–404 (EHHHDDSLPH…HGPVQLSYYD (211 aa)) are disordered. An Interaction with host TRAF proteins motif is present at residues 204–208 (PQQAT). Basic and acidic residues predominate over residues 210-224 (DSSHESDSNSNEGRH). Composition is skewed to low complexity over residues 251–322 (NGPQ…PQDP) and 375–384 (PHLPTLLLGT). The segment at 370-404 (GGGGDPHLPTLLLGTSGSGGDDDDPHGPVQLSYYD) is CTAR2.

Belongs to the herpesviridae LMP-1 family. In terms of assembly, interacts (via PXQXT motif) with host tumor necrosis factor receptor-associated factor (TRAF) proteins TRAF1, TRAF2, TRAF3 and TRAF5. Interacts with human protein ZMYND11; leading to negatively regulate NF-kappa-B activation. Interacts with host UBE2I; this interaction induces the sumoylation of various cellular proteins. Interacts with host IRF7. Interacts with host TYK2. In terms of processing, ubiquitinated on the N-terminus.

It is found in the host cell membrane. In terms of biological role, acts as a CD40 functional homolog to prevent apoptosis of infected B-lymphocytes and drive their proliferation. Functions as a constitutively active tumor necrosis factor receptor that induces the activation of several signaling pathways, including those of the NF-kappa-B family. LMP1 signaling leads to up-regulation of antiapoptotic proteins and provide growth signals in latently infected cells. Interacts with host UBE2I and subsequently affects the sumoylation state of several cellular proteins. For example, induces the sumoylation of host IRF7 thereby limiting its transcriptional activity and modulating the activation of innate immune responses. Also inhibits host IFN-alpha-stimulated STAT2 nuclear translocation and interferon-stimulated response element transcriptional activity by interacting with and inhibiting host TYK2. Induces SUMO expression during viral latency thereby dysregulating the host sumoylation processes. In Homo sapiens (Human), this protein is Latent membrane protein 1 (LMP1).